Consider the following 637-residue polypeptide: Probable ATP-binding protein YheS (637 aa).

2 ABC transporter domains span residues 2–246 and 313–527; these read IVFS…AQQQ and LKME…KQEN. ATP contacts are provided by residues 34–41 and 345–352; these read GKNGCGKS and GRNGAGKS. The tract at residues 523–559 is disordered; sequence QKQENQTDEAPKENANSAQARKDQKRREAELRAQTQP. A compositionally biased stretch (basic and acidic residues) spans 542-553; it reads ARKDQKRREAEL.

Belongs to the ABC transporter superfamily. ABCF family. YheS subfamily.

Genetic data indicate it may be involved in ribosome assembly or function. Ectopic expression exacerbates the cold-sensitive growth phenotype of a bipA deletion. The protein is Probable ATP-binding protein YheS (yheS) of Escherichia coli O6:H1 (strain CFT073 / ATCC 700928 / UPEC).